The sequence spans 350 residues: Holliday junction branch migration complex subunit RuvB (350 aa).

The interval 1–182 is large ATPase domain (RuvB-L); the sequence is MEDRIVTPLN…FGVLCPMDFY (182 aa). Residues L21, R22, G63, K66, T67, T68, 129–131, R172, Y182, and R219 contribute to the ATP site; that span reads EDY. A Mg(2+)-binding site is contributed by T67. Residues 183 to 253 form a small ATPAse domain (RuvB-S) region; that stretch reads DQEELSEIVV…TSKAALELLE (71 aa). The segment at 256–350 is head domain (RuvB-H); it reads KEGFDSIDNK…KQSSLFDGEV (95 aa). The DNA site is built by R311 and R316.

This sequence belongs to the RuvB family. Homohexamer. Forms an RuvA(8)-RuvB(12)-Holliday junction (HJ) complex. HJ DNA is sandwiched between 2 RuvA tetramers; dsDNA enters through RuvA and exits via RuvB. An RuvB hexamer assembles on each DNA strand where it exits the tetramer. Each RuvB hexamer is contacted by two RuvA subunits (via domain III) on 2 adjacent RuvB subunits; this complex drives branch migration. In the full resolvosome a probable DNA-RuvA(4)-RuvB(12)-RuvC(2) complex forms which resolves the HJ.

The protein localises to the cytoplasm. It catalyses the reaction ATP + H2O = ADP + phosphate + H(+). The RuvA-RuvB-RuvC complex processes Holliday junction (HJ) DNA during genetic recombination and DNA repair, while the RuvA-RuvB complex plays an important role in the rescue of blocked DNA replication forks via replication fork reversal (RFR). RuvA specifically binds to HJ cruciform DNA, conferring on it an open structure. The RuvB hexamer acts as an ATP-dependent pump, pulling dsDNA into and through the RuvAB complex. RuvB forms 2 homohexamers on either side of HJ DNA bound by 1 or 2 RuvA tetramers; 4 subunits per hexamer contact DNA at a time. Coordinated motions by a converter formed by DNA-disengaged RuvB subunits stimulates ATP hydrolysis and nucleotide exchange. Immobilization of the converter enables RuvB to convert the ATP-contained energy into a lever motion, pulling 2 nucleotides of DNA out of the RuvA tetramer per ATP hydrolyzed, thus driving DNA branch migration. The RuvB motors rotate together with the DNA substrate, which together with the progressing nucleotide cycle form the mechanistic basis for DNA recombination by continuous HJ branch migration. Branch migration allows RuvC to scan DNA until it finds its consensus sequence, where it cleaves and resolves cruciform DNA. The sequence is that of Holliday junction branch migration complex subunit RuvB from Clostridium kluyveri (strain NBRC 12016).